The sequence spans 122 residues: Large ribosomal subunit protein uL14c (122 aa).

The protein belongs to the universal ribosomal protein uL14 family. As to quaternary structure, part of the 50S ribosomal subunit.

The protein localises to the plastid. It localises to the chloroplast. In terms of biological role, binds to 23S rRNA. This is Large ribosomal subunit protein uL14c from Adiantum capillus-veneris (Maidenhair fern).